Reading from the N-terminus, the 197-residue chain is UPF0228 protein MA_3125 (197 aa).

This sequence belongs to the UPF0228 family.

This chain is UPF0228 protein MA_3125, found in Methanosarcina acetivorans (strain ATCC 35395 / DSM 2834 / JCM 12185 / C2A).